Here is a 280-residue protein sequence, read N- to C-terminus: 4-hydroxy-3-methylbut-2-enyl diphosphate reductase (280 aa).

Residue C12 coordinates [4Fe-4S] cluster. Residues H40 and H72 each coordinate (2E)-4-hydroxy-3-methylbut-2-enyl diphosphate. Positions 40 and 72 each coordinate dimethylallyl diphosphate. 2 residues coordinate isopentenyl diphosphate: H40 and H72. C94 contributes to the [4Fe-4S] cluster binding site. H122 contributes to the (2E)-4-hydroxy-3-methylbut-2-enyl diphosphate binding site. H122 provides a ligand contact to dimethylallyl diphosphate. H122 contacts isopentenyl diphosphate. E124 functions as the Proton donor in the catalytic mechanism. Residue T160 participates in (2E)-4-hydroxy-3-methylbut-2-enyl diphosphate binding. Position 188 (C188) interacts with [4Fe-4S] cluster. (2E)-4-hydroxy-3-methylbut-2-enyl diphosphate-binding residues include S216, N218, and S260. Positions 216, 218, and 260 each coordinate dimethylallyl diphosphate. Isopentenyl diphosphate contacts are provided by S216, N218, and S260.

This sequence belongs to the IspH family. Requires [4Fe-4S] cluster as cofactor.

The enzyme catalyses isopentenyl diphosphate + 2 oxidized [2Fe-2S]-[ferredoxin] + H2O = (2E)-4-hydroxy-3-methylbut-2-enyl diphosphate + 2 reduced [2Fe-2S]-[ferredoxin] + 2 H(+). The catalysed reaction is dimethylallyl diphosphate + 2 oxidized [2Fe-2S]-[ferredoxin] + H2O = (2E)-4-hydroxy-3-methylbut-2-enyl diphosphate + 2 reduced [2Fe-2S]-[ferredoxin] + 2 H(+). It participates in isoprenoid biosynthesis; dimethylallyl diphosphate biosynthesis; dimethylallyl diphosphate from (2E)-4-hydroxy-3-methylbutenyl diphosphate: step 1/1. The protein operates within isoprenoid biosynthesis; isopentenyl diphosphate biosynthesis via DXP pathway; isopentenyl diphosphate from 1-deoxy-D-xylulose 5-phosphate: step 6/6. Its function is as follows. Catalyzes the conversion of 1-hydroxy-2-methyl-2-(E)-butenyl 4-diphosphate (HMBPP) into a mixture of isopentenyl diphosphate (IPP) and dimethylallyl diphosphate (DMAPP). Acts in the terminal step of the DOXP/MEP pathway for isoprenoid precursor biosynthesis. This chain is 4-hydroxy-3-methylbut-2-enyl diphosphate reductase, found in Trichlorobacter lovleyi (strain ATCC BAA-1151 / DSM 17278 / SZ) (Geobacter lovleyi).